Reading from the N-terminus, the 346-residue chain is Biotin synthase (346 aa).

Residues 38–256 enclose the Radical SAM core domain; the sequence is RQVQVSTLLS…IAVARIMMPT (219 aa). 3 residues coordinate [4Fe-4S] cluster: Cys-53, Cys-57, and Cys-60. Residues Cys-97, Cys-128, Cys-188, and Arg-260 each coordinate [2Fe-2S] cluster.

Belongs to the radical SAM superfamily. Biotin synthase family. As to quaternary structure, homodimer. The cofactor is [4Fe-4S] cluster. Requires [2Fe-2S] cluster as cofactor.

The enzyme catalyses (4R,5S)-dethiobiotin + (sulfur carrier)-SH + 2 reduced [2Fe-2S]-[ferredoxin] + 2 S-adenosyl-L-methionine = (sulfur carrier)-H + biotin + 2 5'-deoxyadenosine + 2 L-methionine + 2 oxidized [2Fe-2S]-[ferredoxin]. It functions in the pathway cofactor biosynthesis; biotin biosynthesis; biotin from 7,8-diaminononanoate: step 2/2. Its function is as follows. Catalyzes the conversion of dethiobiotin (DTB) to biotin by the insertion of a sulfur atom into dethiobiotin via a radical-based mechanism. The chain is Biotin synthase from Shigella dysenteriae serotype 1 (strain Sd197).